The primary structure comprises 113 residues: Protein MGF 110-2L (113 aa).

A signal peptide spans 1–31 (MGFFSYLGLVLVGLASLTSLASLANLQDFST).

The protein belongs to the asfivirus MGF 110 family.

Functionally, plays a role in virus cell tropism, and may be required for efficient virus replication in macrophages. The polypeptide is Protein MGF 110-2L (African swine fever virus (isolate Pig/Kenya/KEN-50/1950) (ASFV)).